A 221-amino-acid chain; its full sequence is Alpha-ketoglutarate-dependent dioxygenase alkB homolog 7, mitochondrial (221 aa).

Residues 1–23 (MAGSRRLAMRLLSGCAWVRGSDS) constitute a mitochondrion transit peptide. Positions 121 and 123 each coordinate Fe cation. Tyrosine 165 is a binding site for 2-oxoglutarate. Histidine 177 contacts Fe cation. 2-oxoglutarate-binding positions include 197-199 (RIS) and arginine 203.

Belongs to the alkB family. It depends on Fe(2+) as a cofactor. Widely expressed.

The protein localises to the mitochondrion matrix. In terms of biological role, may function as protein hydroxylase; can catalyze auto-hydroxylation at Leu-110 (in vitro), but this activity may be due to the absence of the true substrate. Required to induce programmed necrosis in response to DNA damage caused by cytotoxic alkylating agents. Acts by triggering the collapse of mitochondrial membrane potential and loss of mitochondrial function that leads to energy depletion and cell death. ALKBH7-mediated necrosis is probably required to prevent the accumulation of cells with DNA damage. Does not display DNA demethylase activity. Involved in fatty acid metabolism. In Mus musculus (Mouse), this protein is Alpha-ketoglutarate-dependent dioxygenase alkB homolog 7, mitochondrial (Alkbh7).